Here is a 220-residue protein sequence, read N- to C-terminus: MGAFIAKMLLPTISSLVFVPAASVAAKRGFHMEAMVYFFTMFFTAIYHACDGPGLSILCFMKYDILEYFSVYGTAISMWVTLLALGDFDEPKRSSLTMFGVLTAAVRIYQDRLGYGIYSGPIGTAVFMITVKWLQKMKEKKGLYPDKSVYTQQVGPGCCFGALALMLRFYFEEWDYAYVHSFYHVSLAMSFILLLPKKNRYAGTGRNAAKLNCYTLCCCV.

A topological domain (extracellular) is located at residue M1. A helical transmembrane segment spans residues 2 to 22; that stretch reads GAFIAKMLLPTISSLVFVPAA. Over 23–37 the chain is Cytoplasmic; sequence SVAAKRGFHMEAMVY. A helical transmembrane segment spans residues 38 to 58; sequence FFTMFFTAIYHACDGPGLSIL. The Extracellular segment spans residues 59–64; sequence CFMKYD. The helical transmembrane segment at 65–85 threads the bilayer; the sequence is ILEYFSVYGTAISMWVTLLAL. Residues 86–93 are Cytoplasmic-facing; sequence GDFDEPKR. A helical transmembrane segment spans residues 94–110; sequence SSLTMFGVLTAAVRIYQ. At 111 to 112 the chain is on the extracellular side; it reads DR. A helical membrane pass occupies residues 113–133; sequence LGYGIYSGPIGTAVFMITVKW. At 134 to 153 the chain is on the cytoplasmic side; sequence LQKMKEKKGLYPDKSVYTQQ. A helical membrane pass occupies residues 154–174; that stretch reads VGPGCCFGALALMLRFYFEEW. Position 175 (D175) is a topological domain, extracellular. Residues 176-196 traverse the membrane as a helical segment; it reads YAYVHSFYHVSLAMSFILLLP. Residues 197–220 lie on the Cytoplasmic side of the membrane; that stretch reads KKNRYAGTGRNAAKLNCYTLCCCV.

Belongs to the TMEM8 family.

It localises to the cell membrane. In terms of biological role, myoblast-specific protein that mediates myoblast fusion, an essential step for the formation of multi-nucleated muscle fibers. Actively participates in the membrane fusion reaction by mediating the mixing of cell membrane lipids (hemifusion) upstream of mymx. The polypeptide is Protein myomaker (Danio rerio (Zebrafish)).